The primary structure comprises 346 residues: Golgi to ER traffic protein 4 (346 aa).

A disordered region spans residues 317–346 (GQNQGGSRRTPQGRSQSKTVEAPPASMELD). Residues 321–335 (GGSRRTPQGRSQSKT) show a composition bias toward polar residues.

It belongs to the GET4 family. Component of the get4/get5/sgt2 sorting complex.

Its subcellular location is the cytoplasm. Component of the get4/get5/sgt2 sorting complex involved in the GET (guided entry of TA proteins) pathway that leads to the insertion of tail-anchored (TA) proteins into the endoplasmic reticulum. Get4 and get5 form an obligate complex that catalyzes the transfer of tail-anchored proteins destined to the endoplasmic reticulum from sgt2 to the cytosolic targeting factor which then targets the TA protein to the ER membrane via get1/get2. In Aspergillus fumigatus (strain ATCC MYA-4609 / CBS 101355 / FGSC A1100 / Af293) (Neosartorya fumigata), this protein is Golgi to ER traffic protein 4.